The sequence spans 769 residues: Subtilisin-like protease 3 (769 aa).

N68, N102, N108, N295, N316, and N356 each carry an N-linked (GlcNAc...) asparagine glycan. Basic residues predominate over residues 293 to 302; sequence KINHSNKHKN. Residues 293-329 are disordered; it reads KINHSNKHKNNNNNNNNNDYHNNNKSNYHSHSSAKCQ. Positions 303-325 are enriched in low complexity; the sequence is NNNNNNNNDYHNNNKSNYHSHSS. The 412-residue stretch at 345–756 folds into the Peptidase S8 domain; that stretch reads GYDIIQMEEG…GGFINVYDLV (412 aa). D372 functions as the Charge relay system in the catalytic mechanism. A disordered region spans residues 468-493; it reads NIKSSDNIKSSDNINSSDNIKSSDNN. N482 and N515 each carry an N-linked (GlcNAc...) asparagine glycan. H523 acts as the Charge relay system in catalysis. N584 and N616 each carry an N-linked (GlcNAc...) asparagine glycan. S701 functions as the Charge relay system in the catalytic mechanism. N720 carries an N-linked (GlcNAc...) asparagine glycan.

It belongs to the peptidase S8 family.

It is found in the secreted. It catalyses the reaction Hydrolysis of proteins with broad specificity for peptide bonds, and a preference for a large uncharged residue in P1. Hydrolyzes peptide amides.. Functionally, serine protease which may cleave PFN/profilin. The protein is Subtilisin-like protease 3 of Plasmodium falciparum (isolate 3D7).